Consider the following 355-residue polypeptide: Heat-inducible transcription repressor HrcA (355 aa).

This sequence belongs to the HrcA family.

Negative regulator of class I heat shock genes (grpE-dnaK-dnaJ and groELS operons). Prevents heat-shock induction of these operons. The sequence is that of Heat-inducible transcription repressor HrcA from Nitratidesulfovibrio vulgaris (strain ATCC 29579 / DSM 644 / CCUG 34227 / NCIMB 8303 / VKM B-1760 / Hildenborough) (Desulfovibrio vulgaris).